We begin with the raw amino-acid sequence, 458 residues long: Argininosuccinate lyase (458 aa).

The protein belongs to the lyase 1 family. Argininosuccinate lyase subfamily.

The protein resides in the cytoplasm. It carries out the reaction 2-(N(omega)-L-arginino)succinate = fumarate + L-arginine. It participates in amino-acid biosynthesis; L-arginine biosynthesis; L-arginine from L-ornithine and carbamoyl phosphate: step 3/3. The polypeptide is Argininosuccinate lyase (Lachnospira eligens (strain ATCC 27750 / DSM 3376 / VPI C15-48 / C15-B4) (Eubacterium eligens)).